Here is a 271-residue protein sequence, read N- to C-terminus: Glutamate racemase (271 aa).

Residues 12-13 and 44-45 contribute to the substrate site; these read DS and YG. Cys-75 acts as the Proton donor/acceptor in catalysis. 76-77 lines the substrate pocket; the sequence is NT. Cys-185 functions as the Proton donor/acceptor in the catalytic mechanism. Residue 186–187 coordinates substrate; sequence TH.

This sequence belongs to the aspartate/glutamate racemases family.

The enzyme catalyses L-glutamate = D-glutamate. It participates in cell wall biogenesis; peptidoglycan biosynthesis. Provides the (R)-glutamate required for cell wall biosynthesis. The sequence is that of Glutamate racemase from Methylococcus capsulatus (strain ATCC 33009 / NCIMB 11132 / Bath).